The chain runs to 280 residues: Ribosomal RNA small subunit methyltransferase A (280 aa).

Residues histidine 15, leucine 17, glycine 42, glutamate 64, aspartate 89, and asparagine 109 each contribute to the S-adenosyl-L-methionine site.

This sequence belongs to the class I-like SAM-binding methyltransferase superfamily. rRNA adenine N(6)-methyltransferase family. RsmA subfamily.

It localises to the cytoplasm. It carries out the reaction adenosine(1518)/adenosine(1519) in 16S rRNA + 4 S-adenosyl-L-methionine = N(6)-dimethyladenosine(1518)/N(6)-dimethyladenosine(1519) in 16S rRNA + 4 S-adenosyl-L-homocysteine + 4 H(+). Functionally, specifically dimethylates two adjacent adenosines (A1518 and A1519) in the loop of a conserved hairpin near the 3'-end of 16S rRNA in the 30S particle. May play a critical role in biogenesis of 30S subunits. The chain is Ribosomal RNA small subunit methyltransferase A from Synechococcus sp. (strain WH7803).